We begin with the raw amino-acid sequence, 549 residues long: Hydroxylamine reductase (549 aa).

Residues cysteine 5, cysteine 8, cysteine 17, and cysteine 23 each coordinate [4Fe-4S] cluster. Histidine 243, glutamate 267, cysteine 311, cysteine 403, cysteine 431, cysteine 456, glutamate 491, and lysine 493 together coordinate hybrid [4Fe-2O-2S] cluster. At cysteine 403 the chain carries Cysteine persulfide.

It belongs to the HCP family. It depends on [4Fe-4S] cluster as a cofactor. Hybrid [4Fe-2O-2S] cluster is required as a cofactor.

The protein localises to the cytoplasm. It catalyses the reaction A + NH4(+) + H2O = hydroxylamine + AH2 + H(+). Catalyzes the reduction of hydroxylamine to form NH(3) and H(2)O. This chain is Hydroxylamine reductase, found in Desulfitobacterium hafniense (strain DSM 10664 / DCB-2).